The primary structure comprises 54 residues: Ovomucoid (54 aa).

The Kazal-like domain occupies 4–54 (VDCSDYPTHGCTLELKPICGSDNQTYSNKCGFCNAVAQSNGTLTLSHFGKC). Intrachain disulfides connect cysteine 6/cysteine 36, cysteine 14/cysteine 33, and cysteine 22/cysteine 54. N-linked (GlcNAc...) asparagine glycosylation occurs at asparagine 43.

The protein resides in the secreted. The sequence is that of Ovomucoid from Aepypodius arfakianus (Wattled brush turkey).